Here is a 305-residue protein sequence, read N- to C-terminus: Tyrosine recombinase XerC (305 aa).

A Core-binding (CB) domain is found at Thr-4–Glu-95. The region spanning Leu-116–Thr-298 is the Tyr recombinase domain. Catalysis depends on residues Arg-159, Lys-182, His-250, Arg-253, and His-276. The active-site O-(3'-phospho-DNA)-tyrosine intermediate is Tyr-285.

This sequence belongs to the 'phage' integrase family. XerC subfamily. As to quaternary structure, forms a cyclic heterotetrameric complex composed of two molecules of XerC and two molecules of XerD.

The protein resides in the cytoplasm. Site-specific tyrosine recombinase, which acts by catalyzing the cutting and rejoining of the recombining DNA molecules. The XerC-XerD complex is essential to convert dimers of the bacterial chromosome into monomers to permit their segregation at cell division. It also contributes to the segregational stability of plasmids. This chain is Tyrosine recombinase XerC, found in Rickettsia conorii (strain ATCC VR-613 / Malish 7).